A 644-amino-acid polypeptide reads, in one-letter code: DNA mismatch repair protein MutL (644 aa).

Disordered stretches follow at residues 353 to 399 (SESG…SQLT) and 420 to 440 (GSMA…RARA). The span at 370–381 (SPESKTHSTWNE) shows a compositional bias: polar residues. Positions 383–399 (SRVDTSRVEISRDSQLT) are enriched in basic and acidic residues.

This sequence belongs to the DNA mismatch repair MutL/HexB family.

Functionally, this protein is involved in the repair of mismatches in DNA. It is required for dam-dependent methyl-directed DNA mismatch repair. May act as a 'molecular matchmaker', a protein that promotes the formation of a stable complex between two or more DNA-binding proteins in an ATP-dependent manner without itself being part of a final effector complex. The polypeptide is DNA mismatch repair protein MutL (Shewanella sp. (strain MR-4)).